Here is a 211-residue protein sequence, read N- to C-terminus: Thymidylate kinase (211 aa).

11–18 (GPDGAGKT) provides a ligand contact to ATP.

This sequence belongs to the thymidylate kinase family.

The enzyme catalyses dTMP + ATP = dTDP + ADP. Functionally, phosphorylation of dTMP to form dTDP in both de novo and salvage pathways of dTTP synthesis. This chain is Thymidylate kinase, found in Streptococcus equi subsp. equi (strain 4047).